The following is a 273-amino-acid chain: 5-deoxy-glucuronate isomerase (273 aa).

This sequence belongs to the isomerase IolB family.

The catalysed reaction is 5-deoxy-D-glucuronate = 5-dehydro-2-deoxy-D-gluconate. It participates in polyol metabolism; myo-inositol degradation into acetyl-CoA; acetyl-CoA from myo-inositol: step 4/7. Involved in the isomerization of 5-deoxy-glucuronate (5DG) to 5-dehydro-2-deoxy-D-gluconate (DKG or 2-deoxy-5-keto-D-gluconate). The polypeptide is 5-deoxy-glucuronate isomerase (Listeria monocytogenes serotype 4b (strain CLIP80459)).